A 652-amino-acid polypeptide reads, in one-letter code: Acetyl-coenzyme A synthetase (652 aa).

CoA-binding positions include 191–194 (RAGR), threonine 311, and asparagine 335. ATP contacts are provided by residues 387-389 (GEP), 411-416 (DTWWQT), aspartate 500, and arginine 515. Serine 523 is a binding site for CoA. Position 526 (arginine 526) interacts with ATP. Residues valine 537, histidine 539, and isoleucine 542 each contribute to the Mg(2+) site. Arginine 584 contacts CoA. Lysine 609 bears the N6-acetyllysine mark.

This sequence belongs to the ATP-dependent AMP-binding enzyme family. It depends on Mg(2+) as a cofactor. Post-translationally, acetylated. Deacetylation by the SIR2-homolog deacetylase activates the enzyme.

It carries out the reaction acetate + ATP + CoA = acetyl-CoA + AMP + diphosphate. In terms of biological role, catalyzes the conversion of acetate into acetyl-CoA (AcCoA), an essential intermediate at the junction of anabolic and catabolic pathways. Acs undergoes a two-step reaction. In the first half reaction, Acs combines acetate with ATP to form acetyl-adenylate (AcAMP) intermediate. In the second half reaction, it can then transfer the acetyl group from AcAMP to the sulfhydryl group of CoA, forming the product AcCoA. Functionally, enables the cell to use acetate during aerobic growth to generate energy via the TCA cycle, and biosynthetic compounds via the glyoxylate shunt. Acetylates CheY, the response regulator involved in flagellar movement and chemotaxis. In Salmonella typhi, this protein is Acetyl-coenzyme A synthetase.